A 387-amino-acid chain; its full sequence is Calcium sensing receptor, chloroplastic (387 aa).

A chloroplast-targeting transit peptide spans 1–33 (MAMAEMATKSSLSAKLTLPSSSTKKTLSLRQVS). Over 34-186 (VSLPTSTSIS…TMDTISSADP (153 aa)) the chain is Lumenal, thylakoid. The chain crosses the membrane as a helical span at residues 187–207 (SVIVVAAGAAFLAYLLLPPVF). Residues 208 to 387 (SAISFNFRGY…SGTKFLPSSD (180 aa)) are Stromal-facing. Residues 231-352 (CTKNYLMVDI…WLQSRLGTDS (122 aa)) form the Rhodanese domain. Phosphothreonine is present on Thr-380.

Post-translationally, phosphorylation seems to be light-dependent. In terms of tissue distribution, predominantly expressed in the shoot, including guard cells.

It localises to the plastid. The protein resides in the chloroplast thylakoid membrane. Its function is as follows. Modulates cytoplasmic Ca(2+) concentration and is crucial for proper stomatal regulation in response to elevated levels of external Ca(2+). May function by regulating concentrations of inositol 1,4,5-trisphosphate (IP3), which in turn triggers release of Ca(2+) from internal stores. May play a role in de-etiolation. This chain is Calcium sensing receptor, chloroplastic (CAS), found in Arabidopsis thaliana (Mouse-ear cress).